Here is a 180-residue protein sequence, read N- to C-terminus: 20 kDa protein (180 aa).

Interacts with Hsp70h.

Its subcellular location is the virion. Functionally, involved in systemic transport. Necessary for long-distance transport of the virus through the phloem. The sequence is that of 20 kDa protein from Beet yellows virus (isolate Ukraine) (BYV).